We begin with the raw amino-acid sequence, 292 residues long: Rab effector Noc2 (292 aa).

In terms of domain architecture, RabBD spans 41–158 (QRKSQSLSPA…KRSGAWFYKG (118 aa)). The segment at 89–146 (GNGLSQCLLCGEVLGFLGSSSVFCKDCRKKVCTKCGIEASPSQKRPLWLCKICSEQRE) adopts an FYVE-type zinc-finger fold. Cys95, Cys98, Cys112, Cys115, Cys120, Cys123, Cys138, and Cys141 together coordinate Zn(2+). Positions 175 to 292 (PSFRPLPVEP…RTLAGPRGPR (118 aa)) are disordered. A compositionally biased stretch (basic and acidic residues) spans 221 to 235 (LDDRLRPAGVRDPKG). Ser248 is subject to Phosphoserine. Residues 257–269 (ASCLSGSQSSLAS) are compositionally biased toward low complexity.

In terms of assembly, recruited to dense-core vesicles through specific interaction with RAB27A in endocrine cells. Interacts with RAB3A, RAB3B, RAB3C and RAB3D. Interacts with ZYX.

It is found in the cytoplasm. The protein localises to the cytoplasmic vesicle. It localises to the secretory vesicle membrane. Rab GTPase effector involved in the late steps of regulated exocytosis, both in endocrine and exocrine cells. The protein is Rab effector Noc2 (RPH3AL) of Bos taurus (Bovine).